The following is a 490-amino-acid chain: ATP synthase subunit alpha 1 (490 aa).

This sequence belongs to the ATPase alpha/beta chains family. In terms of assembly, F-type ATPases have 2 components, CF(1) - the catalytic core - and CF(0) - the membrane proton channel. CF(1) has five subunits: alpha(3), beta(3), gamma(1), delta(1), epsilon(1). CF(0) has three main subunits: a(1), b(2) and c(9-12). The alpha and beta chains form an alternating ring which encloses part of the gamma chain. CF(1) is attached to CF(0) by a central stalk formed by the gamma and epsilon chains, while a peripheral stalk is formed by the delta and b chains.

Its subcellular location is the cell inner membrane. The enzyme catalyses ATP + H2O + 4 H(+)(in) = ADP + phosphate + 5 H(+)(out). Produces ATP from ADP in the presence of a proton gradient across the membrane. The alpha chain is a regulatory subunit. This Legionella pneumophila (strain Paris) protein is ATP synthase subunit alpha 1.